Consider the following 748-residue polypeptide: Polyribonucleotide nucleotidyltransferase (748 aa).

The Mg(2+) site is built by aspartate 522 and aspartate 528. The region spanning 588 to 647 (PRVTTIRVPVDKIGEVIGPKGKIINAITEETGAQISIEDDGTVFVGATDGPSAQAAIDRI) is the KH domain. Residues 659 to 728 (GERFLGTVVK…KRGKISLVLV (70 aa)) enclose the S1 motif domain.

It belongs to the polyribonucleotide nucleotidyltransferase family. The cofactor is Mg(2+).

The protein resides in the cytoplasm. It catalyses the reaction RNA(n+1) + phosphate = RNA(n) + a ribonucleoside 5'-diphosphate. In terms of biological role, involved in mRNA degradation. Catalyzes the phosphorolysis of single-stranded polyribonucleotides processively in the 3'- to 5'-direction. The protein is Polyribonucleotide nucleotidyltransferase of Mycobacterium avium (strain 104).